A 266-amino-acid polypeptide reads, in one-letter code: 3-deoxy-manno-octulosonate cytidylyltransferase (266 aa).

It belongs to the KdsB family.

The protein resides in the cytoplasm. It carries out the reaction 3-deoxy-alpha-D-manno-oct-2-ulosonate + CTP = CMP-3-deoxy-beta-D-manno-octulosonate + diphosphate. It participates in nucleotide-sugar biosynthesis; CMP-3-deoxy-D-manno-octulosonate biosynthesis; CMP-3-deoxy-D-manno-octulosonate from 3-deoxy-D-manno-octulosonate and CTP: step 1/1. Its pathway is bacterial outer membrane biogenesis; lipopolysaccharide biosynthesis. In terms of biological role, activates KDO (a required 8-carbon sugar) for incorporation into bacterial lipopolysaccharide in Gram-negative bacteria. The chain is 3-deoxy-manno-octulosonate cytidylyltransferase from Paraburkholderia xenovorans (strain LB400).